Here is a 441-residue protein sequence, read N- to C-terminus: GTPase Der (441 aa).

2 consecutive EngA-type G domains span residues 4-168 and 177-352; these read PVVA…PEDI and IRIA…EQNS. GTP-binding positions include 10 to 17, 57 to 61, 121 to 124, 183 to 190, 230 to 234, and 295 to 298; these read GRPNVGKS, DTGGI, NKVE, DTAGM, and NKWD. Residues 353-437 form the KH-like domain; sequence TRVATATLNT…PIRMIVRQKD (85 aa).

It belongs to the TRAFAC class TrmE-Era-EngA-EngB-Septin-like GTPase superfamily. EngA (Der) GTPase family. Associates with the 50S ribosomal subunit.

GTPase that plays an essential role in the late steps of ribosome biogenesis. The chain is GTPase Der from Desulfitobacterium hafniense (strain Y51).